The primary structure comprises 120 residues: Large ribosomal subunit protein uL18c (120 aa).

Belongs to the universal ribosomal protein uL18 family. As to quaternary structure, part of the 50S ribosomal subunit; contacts the 5S rRNA.

It localises to the plastid. It is found in the chloroplast. Functionally, binds 5S rRNA, forms part of the central protuberance of the 50S subunit. The polypeptide is Large ribosomal subunit protein uL18c (rpl18) (Pyropia yezoensis (Susabi-nori)).